The following is a 283-amino-acid chain: Polyamine aminopropyltransferase (283 aa).

Positions 5–241 constitute a PABS domain; it reads NNWYIEHFER…GWWSVTMARK (237 aa). Q35 is a binding site for S-methyl-5'-thioadenosine. Spermidine-binding residues include H66 and D90. S-methyl-5'-thioadenosine contacts are provided by residues D110 and 141 to 142; that span reads DG. The active-site Proton acceptor is D160. Residue 160-163 participates in spermidine binding; it reads DSTD. P167 is an S-methyl-5'-thioadenosine binding site.

The protein belongs to the spermidine/spermine synthase family. Homodimer or homotetramer.

Its subcellular location is the cytoplasm. The enzyme catalyses S-adenosyl 3-(methylsulfanyl)propylamine + putrescine = S-methyl-5'-thioadenosine + spermidine + H(+). It functions in the pathway amine and polyamine biosynthesis; spermidine biosynthesis; spermidine from putrescine: step 1/1. Functionally, catalyzes the irreversible transfer of a propylamine group from the amino donor S-adenosylmethioninamine (decarboxy-AdoMet) to putrescine (1,4-diaminobutane) to yield spermidine. The chain is Polyamine aminopropyltransferase from Stenotrophomonas maltophilia (strain K279a).